We begin with the raw amino-acid sequence, 689 residues long: Glycine--tRNA ligase beta subunit (689 aa).

The protein belongs to the class-II aminoacyl-tRNA synthetase family. Tetramer of two alpha and two beta subunits.

It localises to the cytoplasm. The catalysed reaction is tRNA(Gly) + glycine + ATP = glycyl-tRNA(Gly) + AMP + diphosphate. The sequence is that of Glycine--tRNA ligase beta subunit from Escherichia coli (strain K12 / MC4100 / BW2952).